The following is a 251-amino-acid chain: Sugar fermentation stimulation protein homolog (251 aa).

It belongs to the SfsA family.

This Yersinia pseudotuberculosis serotype O:1b (strain IP 31758) protein is Sugar fermentation stimulation protein homolog.